A 469-amino-acid chain; its full sequence is Ribosomal protein uS12 methylthiotransferase RimO (469 aa).

Residues 3–119 (TRVYMHTLGC…VARIVSDAQA (117 aa)) enclose the MTTase N-terminal domain. 6 residues coordinate [4Fe-4S] cluster: Cys12, Cys48, Cys82, Cys154, Cys158, and Cys161. Residues 140-370 (SLPSHTAYLK…MAVQQAISRA (231 aa)) form the Radical SAM core domain. The 69-residue stretch at 373–441 (QAMIGRRVEV…EYDLVGRVVA (69 aa)) folds into the TRAM domain. The segment at 444–469 (PSRAARPLPAAPRAAPARKGGLNVLR) is disordered. The segment covering 447 to 461 (AARPLPAAPRAAPAR) has biased composition (low complexity).

The protein belongs to the methylthiotransferase family. RimO subfamily. [4Fe-4S] cluster serves as cofactor.

The protein resides in the cytoplasm. It catalyses the reaction L-aspartate(89)-[ribosomal protein uS12]-hydrogen + (sulfur carrier)-SH + AH2 + 2 S-adenosyl-L-methionine = 3-methylsulfanyl-L-aspartate(89)-[ribosomal protein uS12]-hydrogen + (sulfur carrier)-H + 5'-deoxyadenosine + L-methionine + A + S-adenosyl-L-homocysteine + 2 H(+). In terms of biological role, catalyzes the methylthiolation of an aspartic acid residue of ribosomal protein uS12. This chain is Ribosomal protein uS12 methylthiotransferase RimO, found in Anaeromyxobacter sp. (strain K).